The following is a 268-amino-acid chain: Energy-coupling factor transporter transmembrane protein EcfT (268 aa).

A run of 6 helical transmembrane segments spans residues 26-46, 47-67, 73-93, 116-136, 151-171, and 246-266; these read ILAV…LSYG, ILIG…GLLL, LWII…GEAL, LVLL…IVLT, VPAH…PTLL, and ALTG…RWGI.

Belongs to the energy-coupling factor EcfT family. In terms of assembly, forms a stable energy-coupling factor (ECF) transporter complex composed of 2 membrane-embedded substrate-binding proteins (S component), 2 ATP-binding proteins (A component) and 2 transmembrane proteins (T component). May be able to interact with more than 1 S component at a time.

It is found in the cell membrane. Functionally, transmembrane (T) component of an energy-coupling factor (ECF) ABC-transporter complex. Unlike classic ABC transporters this ECF transporter provides the energy necessary to transport a number of different substrates. The protein is Energy-coupling factor transporter transmembrane protein EcfT of Acidaminococcus fermentans (strain ATCC 25085 / DSM 20731 / CCUG 9996 / CIP 106432 / VR4).